The chain runs to 215 residues: MFGFLKQVGDYTRDAVDAARNLAQGFSVTFDHMKRRPVTVQYPYEKLIPSERYRGRIHYEFDKCIACEVCVRVCPINLPVVDWVMNKATKKKELRNYSIDFGVCIFCGNCVEYCPTNCLSMTEEYELAAFDRHSLNYDNVALGRLPTSVTTDPSVQPLRELAYLPAGEMDPHGVPNDRPRAGQLPSQVLETLAPPAKVGAKNEGQSTGTTQEGEA.

4Fe-4S ferredoxin-type domains follow at residues 55 to 84 (GRIH…VDWV) and 95 to 124 (RNYS…MTEE). 8 residues coordinate [4Fe-4S] cluster: cysteine 64, cysteine 67, cysteine 70, cysteine 74, cysteine 104, cysteine 107, cysteine 110, and cysteine 114. The interval 166-215 (AGEMDPHGVPNDRPRAGQLPSQVLETLAPPAKVGAKNEGQSTGTTQEGEA) is disordered. The span at 169 to 180 (MDPHGVPNDRPR) shows a compositional bias: basic and acidic residues. Positions 203–215 (EGQSTGTTQEGEA) are enriched in polar residues.

This sequence belongs to the complex I 23 kDa subunit family. In terms of assembly, NDH-1 is composed of at least 11 different subunits. [4Fe-4S] cluster is required as a cofactor.

The protein localises to the cellular thylakoid membrane. It catalyses the reaction a plastoquinone + NADH + (n+1) H(+)(in) = a plastoquinol + NAD(+) + n H(+)(out). The catalysed reaction is a plastoquinone + NADPH + (n+1) H(+)(in) = a plastoquinol + NADP(+) + n H(+)(out). In terms of biological role, NDH-1 shuttles electrons from an unknown electron donor, via FMN and iron-sulfur (Fe-S) centers, to quinones in the respiratory and/or the photosynthetic chain. The immediate electron acceptor for the enzyme in this species is believed to be plastoquinone. Couples the redox reaction to proton translocation, and thus conserves the redox energy in a proton gradient. This Parasynechococcus marenigrum (strain WH8102) protein is NAD(P)H-quinone oxidoreductase subunit I.